A 489-amino-acid polypeptide reads, in one-letter code: Bifunctional protein HldE (489 aa).

A ribokinase region spans residues 1–330 (MFDFDGLSNA…RKILPPAFLA (330 aa)). 205 to 208 (NRKE) contributes to the ATP binding site. D275 is a catalytic residue. Positions 358–489 (FTNGCFDILH…SLVKRAGGRA (132 aa)) are cytidylyltransferase.

The protein in the N-terminal section; belongs to the carbohydrate kinase PfkB family. This sequence in the C-terminal section; belongs to the cytidylyltransferase family. As to quaternary structure, homodimer.

It catalyses the reaction D-glycero-beta-D-manno-heptose 7-phosphate + ATP = D-glycero-beta-D-manno-heptose 1,7-bisphosphate + ADP + H(+). The enzyme catalyses D-glycero-beta-D-manno-heptose 1-phosphate + ATP + H(+) = ADP-D-glycero-beta-D-manno-heptose + diphosphate. Its pathway is nucleotide-sugar biosynthesis; ADP-L-glycero-beta-D-manno-heptose biosynthesis; ADP-L-glycero-beta-D-manno-heptose from D-glycero-beta-D-manno-heptose 7-phosphate: step 1/4. The protein operates within nucleotide-sugar biosynthesis; ADP-L-glycero-beta-D-manno-heptose biosynthesis; ADP-L-glycero-beta-D-manno-heptose from D-glycero-beta-D-manno-heptose 7-phosphate: step 3/4. Its function is as follows. Catalyzes the phosphorylation of D-glycero-D-manno-heptose 7-phosphate at the C-1 position to selectively form D-glycero-beta-D-manno-heptose-1,7-bisphosphate. Catalyzes the ADP transfer from ATP to D-glycero-beta-D-manno-heptose 1-phosphate, yielding ADP-D-glycero-beta-D-manno-heptose. In Nitrobacter hamburgensis (strain DSM 10229 / NCIMB 13809 / X14), this protein is Bifunctional protein HldE.